Reading from the N-terminus, the 176-residue chain is Large ribosomal subunit protein uL6 (176 aa).

This sequence belongs to the universal ribosomal protein uL6 family. As to quaternary structure, part of the 50S ribosomal subunit.

In terms of biological role, this protein binds to the 23S rRNA, and is important in its secondary structure. It is located near the subunit interface in the base of the L7/L12 stalk, and near the tRNA binding site of the peptidyltransferase center. This is Large ribosomal subunit protein uL6 from Lactobacillus delbrueckii subsp. bulgaricus (strain ATCC 11842 / DSM 20081 / BCRC 10696 / JCM 1002 / NBRC 13953 / NCIMB 11778 / NCTC 12712 / WDCM 00102 / Lb 14).